A 432-amino-acid chain; its full sequence is Alpha-ketoglutarate permease (432 aa).

Residues 1 to 32 (MAESTVTADSKLTSSDTRRRIWAIVGASSGNL) are Cytoplasmic-facing. A helical transmembrane segment spans residues 33-53 (VEWFDFYVYSFCSLYFAHIFF). Topologically, residues 54–62 (PSGNTTTQL) are periplasmic. Residues 63–83 (LQTAGVFAAGFLMRPIGGWLF) traverse the membrane as a helical segment. Topologically, residues 84 to 95 (GRIADKHGRKKS) are cytoplasmic. The chain crosses the membrane as a helical span at residues 96 to 116 (MLLSVCMMCFGSLVIACLPGY). Topologically, residues 117–118 (ET) are periplasmic. The chain crosses the membrane as a helical span at residues 119 to 139 (IGTWAPALLLLARLFQGLSVG). Residues 140–162 (GEYGTSATYMSEVAVEGRKGFYA) are Cytoplasmic-facing. The chain crosses the membrane as a helical span at residues 163–183 (SFQYVTLIGGQLLALLVVVVL). The Periplasmic segment spans residues 184–193 (QHTMEDAALR). The chain crosses the membrane as a helical span at residues 194-214 (EWGWRIPFALGAVLAVVALWL). Residues 215 to 243 (RRQLDETSQQETRALKEAGSLKGLWRNRR) lie on the Cytoplasmic side of the membrane. Residues 244-264 (AFIMVLGFTAAGSLCFYTFTT) form a helical membrane-spanning segment. At 265 to 279 (YMQKYLVNTAGMHAN) the chain is on the periplasmic side. The chain crosses the membrane as a helical span at residues 280-300 (VASGIMTAALFVFMLIQPLIG). Topologically, residues 301 to 309 (ALSDKIGRR) are cytoplasmic. The helical transmembrane segment at 310–330 (TSMLCFGSLAAIFTVPILSAL) threads the bilayer. The Periplasmic segment spans residues 331–339 (QNVSSPYAA). The chain crosses the membrane as a helical span at residues 340-360 (FGLVMCALLIVSFYTSISGIL). Residues 361 to 373 (KAEMFPAQVRALG) lie on the Cytoplasmic side of the membrane. A helical membrane pass occupies residues 374–394 (VGLSYAVANAIFGGSAEYVAL). Topologically, residues 395–402 (SLKSIGME) are periplasmic. The helical transmembrane segment at 403-423 (TAFFWYVTLMAVVAFLVSLML) threads the bilayer. The Cytoplasmic segment spans residues 424–432 (HRKGKGMRL).

It belongs to the major facilitator superfamily. Metabolite:H+ Symporter (MHS) family (TC 2.A.1.6) family.

The protein resides in the cell inner membrane. Its function is as follows. Uptake of alpha-ketoglutarate across the boundary membrane with the concomitant import of a cation (symport system). The protein is Alpha-ketoglutarate permease (kgtP) of Escherichia coli (strain K12).